The primary structure comprises 644 residues: Chaperone protein DnaK (644 aa).

Phosphothreonine; by autocatalysis is present on Thr199. Positions 602–644 (LYAEQSAQQQGSAGATGGEQPKADKAADDGVVDAEFEEVKDDK) are disordered. A compositionally biased stretch (low complexity) spans 604–614 (AEQSAQQQGSA). Acidic residues predominate over residues 631 to 644 (GVVDAEFEEVKDDK).

This sequence belongs to the heat shock protein 70 family.

Acts as a chaperone. The protein is Chaperone protein DnaK of Teredinibacter turnerae (strain ATCC 39867 / T7901).